The sequence spans 139 residues: Large-conductance mechanosensitive channel 1 (139 aa).

The next 3 membrane-spanning stretches (helical) occupy residues 8 to 28 (FISK…AAFG), 30 to 50 (IVDS…FGGL), and 81 to 101 (GSFI…FLMV).

The protein belongs to the MscL family. In terms of assembly, homopentamer.

The protein localises to the cell inner membrane. Its function is as follows. Channel that opens in response to stretch forces in the membrane lipid bilayer. May participate in the regulation of osmotic pressure changes within the cell. This Mesorhizobium japonicum (strain LMG 29417 / CECT 9101 / MAFF 303099) (Mesorhizobium loti (strain MAFF 303099)) protein is Large-conductance mechanosensitive channel 1.